Consider the following 89-residue polypeptide: Large ribosomal subunit protein bL27 (89 aa).

A disordered region spans residues 1–20 (MAHKKAGGSSRNGRDSAGKR).

It belongs to the bacterial ribosomal protein bL27 family.

The chain is Large ribosomal subunit protein bL27 from Rhodopseudomonas palustris (strain HaA2).